A 419-amino-acid polypeptide reads, in one-letter code: Gustatory receptor for sugar taste 64c (419 aa).

Over 1-15 the chain is Cytoplasmic; sequence MQQSGQKGTRNTLQH. The helical transmembrane segment at 16–36 threads the bilayer; the sequence is AIGPVLVIAQFFGVLPVAGVW. The Extracellular segment spans residues 37-48; it reads PSCRPERVRFRW. Residues 49 to 69 traverse the membrane as a helical segment; the sequence is ISLSLLAALILFVFSIVDCAL. At 70-82 the chain is on the cytoplasmic side; that stretch reads SSKVVFDHGLKIY. The helical transmembrane segment at 83–103 threads the bilayer; the sequence is TIGSLSFSVICIFCFGVFLLL. Residues 104-139 lie on the Extracellular side of the membrane; the sequence is SRRWPYIIRRTAECEQIFLEPEYDCSYGRGYSSRLR. Residues 140–160 traverse the membrane as a helical segment; that stretch reads LWGVCMLVAALCEHSTYVGSA. The Cytoplasmic segment spans residues 161–204; sequence LYNNHLAIVECKLDANFWQNYFQRERQQLFLIMHFTAWWIPFIE. A helical membrane pass occupies residues 205-225; sequence WTTLSMTFVWNFVDIFLILIC. Topologically, residues 226 to 305 are extracellular; sequence RGMQMRFQQM…FQSKGNYADE (80 aa). Residues 306-326 form a helical membrane-spanning segment; sequence LYFWFCLSYVIIRVLNMMFAA. Residues 327–377 are Cytoplasmic-facing; that stretch reads SSIPQEAKEISYTLYEIPTEFWCVELRRLNEIFLSDHFALSGKGYFLLTRR. A helical membrane pass occupies residues 378–398; sequence LIFAMAATLMVYELVLINQMA. Residues 399-419 are Extracellular-facing; the sequence is GSEVQKSFCEGGVGSSKSIFS.

Belongs to the insect chemoreceptor superfamily. Gustatory receptor (GR) family. Gr5a subfamily. Expressed in Gr5a-expressing sugar-sensing cells.

The protein resides in the cell membrane. Its function is as follows. One of the few identified sugar gustatory receptors identified so far and which promotes the starvation-induced increase of feeding motivation. The polypeptide is Gustatory receptor for sugar taste 64c (Gr64c) (Drosophila melanogaster (Fruit fly)).